The following is a 109-amino-acid chain: Sperm-specific class P protein 10 (109 aa).

One can recognise an MSP domain in the interval 2–109 (SLTADPPACT…TVTIPMSATA (108 aa)).

As to expression, expressed at higher level in testis.

This is Sperm-specific class P protein 10 (ssp-10) from Caenorhabditis elegans.